The sequence spans 241 residues: 3-oxoacyl-[acyl-carrier-protein] reductase FabG (241 aa).

Residues 13-16, serine 38, 57-58, and asparagine 83 contribute to the NADP(+) site; these read GASG and EV. A substrate-binding site is contributed by serine 135. The Proton acceptor role is filled by tyrosine 148. NADP(+) is bound by residues 148-152 and isoleucine 181; that span reads YCASK.

Belongs to the short-chain dehydrogenases/reductases (SDR) family. In terms of assembly, homotetramer.

It catalyses the reaction a (3R)-hydroxyacyl-[ACP] + NADP(+) = a 3-oxoacyl-[ACP] + NADPH + H(+). It participates in lipid metabolism; fatty acid biosynthesis. Its function is as follows. Catalyzes the NADPH-dependent reduction of beta-ketoacyl-ACP substrates to beta-hydroxyacyl-ACP products, the first reductive step in the elongation cycle of fatty acid biosynthesis. The sequence is that of 3-oxoacyl-[acyl-carrier-protein] reductase FabG (fabG) from Rickettsia conorii (strain ATCC VR-613 / Malish 7).